The following is a 467-amino-acid chain: A-type ATP synthase subunit B (467 aa).

It belongs to the ATPase alpha/beta chains family. In terms of assembly, has multiple subunits with at least A(3), B(3), C, D, E, F, H, I and proteolipid K(x).

It localises to the cell membrane. Component of the A-type ATP synthase that produces ATP from ADP in the presence of a proton gradient across the membrane. The B chain is a regulatory subunit. This Methanosphaera stadtmanae (strain ATCC 43021 / DSM 3091 / JCM 11832 / MCB-3) protein is A-type ATP synthase subunit B.